Consider the following 277-residue polypeptide: Small ribosomal subunit protein uS2 (277 aa).

The interval M1–E78 is disordered.

It belongs to the universal ribosomal protein uS2 family.

This Natronomonas pharaonis (strain ATCC 35678 / DSM 2160 / CIP 103997 / JCM 8858 / NBRC 14720 / NCIMB 2260 / Gabara) (Halobacterium pharaonis) protein is Small ribosomal subunit protein uS2.